The chain runs to 152 residues: Small ribosomal subunit protein bS6 (152 aa).

Positions 94–152 are disordered; that stretch reads VKQEGPLPTPKPSNKSSTQSENKDNPETKVESKEEQSVTNSDTSTTKKDDNEIKENTES. Basic and acidic residues-rich tracts occupy residues 114–129 and 138–152; these read ENKD…KEEQ and TTKK…NTES.

This sequence belongs to the bacterial ribosomal protein bS6 family.

In terms of biological role, binds together with bS18 to 16S ribosomal RNA. In Prochlorococcus marinus (strain MIT 9312), this protein is Small ribosomal subunit protein bS6.